Consider the following 533-residue polypeptide: DNA primase large subunit (533 aa).

[4Fe-4S] cluster-binding residues include Cys-298, Cys-377, Cys-393, and Cys-433. The disordered stretch occupies residues 466–492 (RQKRANGSAPPKARIRPDIKGHGDRSM). The segment covering 480 to 490 (IRPDIKGHGDR) has biased composition (basic and acidic residues).

Belongs to the eukaryotic-type primase large subunit family. As to quaternary structure, heterodimer of a catalytic subunit Prim1 and a regulatory subunit Prim2, also known as the DNA primase complex. Component of the alpha DNA polymerase complex (also known as the alpha DNA polymerase-primase complex) consisting of four subunits: the catalytic subunit PolA1, the regulatory subunit PolA2, and the primase complex subunits Prim1 and Prim2 respectively. PolA1 associates with the DNA primase complex before association with PolA2. The cofactor is [4Fe-4S] cluster. Expressed in embryos (at protein level).

Its function is as follows. Regulatory subunit of the DNA primase complex and component of the DNA polymerase alpha complex (also known as the alpha DNA polymerase-primase complex) which play an essential role in the initiation of DNA synthesis. During the S phase of the cell cycle, the DNA polymerase alpha complex (composed of a catalytic subunit PolA1, an accessory subunit PolA2 and two primase subunits, the catalytic subunit Prim1 and the regulatory subunit Prim2) is recruited to DNA at the replicative forks. The primase subunit of the polymerase alpha complex initiates DNA synthesis by oligomerising short RNA primers on both leading and lagging strands. These primers are initially extended by the polymerase alpha catalytic subunit and subsequently transferred to polymerase delta and polymerase epsilon for processive synthesis on the lagging and leading strand, respectively. In the primase complex, both subunits are necessary for the initial di-nucleotide formation, but the extension of the primer depends only on the catalytic subunit. Stabilizes and modulates the activity of the catalytic subunit. The sequence is that of DNA primase large subunit from Drosophila melanogaster (Fruit fly).